The primary structure comprises 429 residues: Ubiquinone hydroxylase UbiL (429 aa).

Residues 1–22 (MSEPLLRGLAAGDPPSATGPVT) form a disordered region.

Belongs to the UbiH/COQ6 family. FAD is required as a cofactor.

The enzyme catalyses a 2-(all-trans-polyprenyl)phenol + NADPH + O2 + H(+) = a 3-(all-trans-polyprenyl)benzene-1,2-diol + NADP(+) + H2O. It functions in the pathway cofactor biosynthesis; ubiquinone biosynthesis. Catalyzes the hydroxylation of two positions of the aromatic ring during ubiquinone biosynthesis. The sequence is that of Ubiquinone hydroxylase UbiL from Rhodospirillum rubrum (strain ATCC 11170 / ATH 1.1.1 / DSM 467 / LMG 4362 / NCIMB 8255 / S1).